Consider the following 550-residue polypeptide: Thermosome subunit (550 aa).

The segment at 529–550 (KEKEGEKGGGGSEDFSSSSDLD) is disordered. The span at 541 to 550 (EDFSSSSDLD) shows a compositional bias: low complexity.

Belongs to the TCP-1 chaperonin family. Forms an oligomeric complex of eight-membered rings.

Functionally, molecular chaperone; binds unfolded polypeptides in vitro, and has a weak ATPase activity. The protein is Thermosome subunit (ths) of Pyrococcus abyssi (strain GE5 / Orsay).